Here is a 1147-residue protein sequence, read N- to C-terminus: MATIVPCSLEKEEGAPSGPRRLQTEIDVDANDSGNELSMGGSSSEGDSMSHHRGEHSPNHHHQDNHLGSGPPPPQFTGSLFDTPPSMIQSPQQQPQFQFNTGFGLGLPQDSFRCSVCSKSSTIGVLPFVCAHKTCQSCYQMTPSSYDRRACKLCGAVSTATANFTSQMYLSPTLPSPPRGALMSDCSTPTMNNHINSSTPLHQPRAFSFSLSGMPGSPSPVMGARMPSSAGGLMMRPIGFPDSDSSLTSWSPLQQPSQLSINNLSSIGGHQQQSPMLMQNVFDSLAVNDDTPVFSPLSPTNTSMHMPPSLMASPDVPKHSATIAPPRNSMCSTPRLQLATPMSSQSQQTFPIPSPLGSQPQQQQPMGPIQCQGCESKISFAYCMQCQEALCIHCVQAHQRVRATKQHAFVELQQLMATLMSRAVQPQQAQQYTQNVGGSVRQALGSVGSGDVFFSGHVSGVENDSIGSGESSPRSSSVCGTHDSVIIGICENCPHSVLLCAICVAQHPGKHRVQPLGDIRVAVGEVVNESQLLQWQCEKTGDTIKQIIDGIVTNATTAENEIRAAFDTHVNALEERRKELLKRVETVKNLKLSVLISQAESLQSKQIDLQQAIQTATKLMDSSDCDEMVLRQVFEKLASCQMGNEGTEPNNNILNVLMLACQVNEDDRLKFTAPQDGILLNKARQFGNIESGPCAKNSSIVGDSFKKAIRERQTVIYVQLRDACGDLLSSSIAATQPTSQALLPHQEPHSHLEQAMPTSDVQAFVISPDGSTVEVTMTPRENGIVALSYYPSIEGSYTLNILVKGTPISGCPTTMDIRRGRNYDEIAAKGPILTFGKEGSGDGELCRPWGICVDQRGRVIVADRSNNRVQIFDKDGNFISKFGTSGNRPGQFDRPAGITTNSLNNIVVADKDNHRVQVFDENGMFLLKFGDRGRAVGYFNYPWGVATNSHNAIAVSDTRNHRVQIFTPQGQFVRKCGFDSAYFFKNLDSPRGLCYLPDGQLLITDFNNHRLAVLSPRNMSEMKVYGSEGDGDGMFVRPQGVVIDPEGHILVCDSRNNRVQVFASDDMRFIGSFGLGPVPNSGFQMPQELPAPYSSLGGPFGAPAFSSAPTPLTPSPRQLLDRPTDLAVGPDGRIYVVDFGNNCIRVF.

The tract at residues 1-93 (MATIVPCSLE…PPSMIQSPQQ (93 aa)) is disordered. Low complexity predominate over residues 33–47 (SGNELSMGGSSSEGD). A compositionally biased stretch (basic and acidic residues) spans 48-65 (SMSHHRGEHSPNHHHQDN). Over residues 84–93 (PPSMIQSPQQ) the composition is skewed to low complexity. The segment at 114-155 (CSVCSKSSTIGVLPFVCAHKTCQSCYQMTPSSYDRRACKLCG) adopts an RING-type zinc-finger fold. Residues 366-412 (MGPIQCQGCESKISFAYCMQCQEALCIHCVQAHQRVRATKQHAFVEL) form a B box-type; atypical zinc finger. Positions 371, 374, 394, and 398 each coordinate Zn(2+). Positions 565–618 (AFDTHVNALEERRKELLKRVETVKNLKLSVLISQAESLQSKQIDLQQAIQTATK) form a coiled coil. The Filamin repeat unit spans residues 723–817 (ACGDLLSSSI…ISGCPTTMDI (95 aa)). NHL repeat units follow at residues 832-875 (ILTF…FDKD), 879-922 (ISKF…FDEN), 926-969 (LLKF…FTPQ), 974-1017 (RKCG…LSPR), 1022-1065 (MKVY…FASD), and 1107-1147 (SAPT…IRVF). Residues 1104-1123 (AFSSAPTPLTPSPRQLLDRP) form a disordered region.

The protein belongs to the TRIM/RBCC family.

The protein resides in the cytoplasm. Its subcellular location is the P-body. Its function is as follows. Heterochronic protein which acts downstream of let-7 in temporal patterning. Plays a role in the developmental timing of postembryonic hypodermal seam cell division and fusion events and adult alae production. Represses lin-29 during late larval stages, which prevents terminal differentiation of hypodermal seam cells and promotes their division. Involved in post-transcriptional gene regulation, uses two independent pathways. Has direct and specific RNA-binding activity and, depending on the location (5'UTR or 3'UTR) of the target site, triggers either mRNA decay or repression of translation. Degrades the mRNA of transcription factor dmd-3 to govern the timing and extent of male tail tip morphogenesis. Plays a role in the sexual maturation of the nervous system. In Caenorhabditis elegans, this protein is Protein lin-41.